The chain runs to 69 residues: Large ribosomal subunit protein eL38z/eL38y (69 aa).

Belongs to the eukaryotic ribosomal protein eL38 family.

The sequence is that of Large ribosomal subunit protein eL38z/eL38y (RPL38A) from Arabidopsis thaliana (Mouse-ear cress).